Consider the following 443-residue polypeptide: Glutamate--tRNA ligase 1 (443 aa).

Residues 8 to 18 carry the 'HIGH' region motif; sequence PSPTGRLHVGN. Residues 239-243 carry the 'KMSKS' region motif; sequence KLSKR. Position 242 (lysine 242) interacts with ATP.

Belongs to the class-I aminoacyl-tRNA synthetase family. Glutamate--tRNA ligase type 1 subfamily. In terms of assembly, monomer.

It is found in the cytoplasm. The enzyme catalyses tRNA(Glu) + L-glutamate + ATP = L-glutamyl-tRNA(Glu) + AMP + diphosphate. Its function is as follows. Catalyzes the attachment of glutamate to tRNA(Glu) in a two-step reaction: glutamate is first activated by ATP to form Glu-AMP and then transferred to the acceptor end of tRNA(Glu). In Rhizorhabdus wittichii (strain DSM 6014 / CCUG 31198 / JCM 15750 / NBRC 105917 / EY 4224 / RW1) (Sphingomonas wittichii), this protein is Glutamate--tRNA ligase 1.